A 215-amino-acid chain; its full sequence is Thiamine-phosphate synthase (215 aa).

4-amino-2-methyl-5-(diphosphooxymethyl)pyrimidine is bound by residues 42–46 (QYREK) and Asp-77. Asp-78 and Asp-97 together coordinate Mg(2+). Ser-116 contributes to the 4-amino-2-methyl-5-(diphosphooxymethyl)pyrimidine binding site. 143-145 (TKS) provides a ligand contact to 2-[(2R,5Z)-2-carboxy-4-methylthiazol-5(2H)-ylidene]ethyl phosphate. Residue Lys-146 coordinates 4-amino-2-methyl-5-(diphosphooxymethyl)pyrimidine. 2-[(2R,5Z)-2-carboxy-4-methylthiazol-5(2H)-ylidene]ethyl phosphate is bound by residues Gly-174 and 194–195 (IS).

Belongs to the thiamine-phosphate synthase family. Mg(2+) is required as a cofactor.

The catalysed reaction is 2-[(2R,5Z)-2-carboxy-4-methylthiazol-5(2H)-ylidene]ethyl phosphate + 4-amino-2-methyl-5-(diphosphooxymethyl)pyrimidine + 2 H(+) = thiamine phosphate + CO2 + diphosphate. It catalyses the reaction 2-(2-carboxy-4-methylthiazol-5-yl)ethyl phosphate + 4-amino-2-methyl-5-(diphosphooxymethyl)pyrimidine + 2 H(+) = thiamine phosphate + CO2 + diphosphate. It carries out the reaction 4-methyl-5-(2-phosphooxyethyl)-thiazole + 4-amino-2-methyl-5-(diphosphooxymethyl)pyrimidine + H(+) = thiamine phosphate + diphosphate. It participates in cofactor biosynthesis; thiamine diphosphate biosynthesis; thiamine phosphate from 4-amino-2-methyl-5-diphosphomethylpyrimidine and 4-methyl-5-(2-phosphoethyl)-thiazole: step 1/1. Its function is as follows. Condenses 4-methyl-5-(beta-hydroxyethyl)thiazole monophosphate (THZ-P) and 2-methyl-4-amino-5-hydroxymethyl pyrimidine pyrophosphate (HMP-PP) to form thiamine monophosphate (TMP). The protein is Thiamine-phosphate synthase of Limosilactobacillus reuteri (strain DSM 20016) (Lactobacillus reuteri).